Here is a 122-residue protein sequence, read N- to C-terminus: Large ribosomal subunit protein uL18 (122 aa).

Belongs to the universal ribosomal protein uL18 family. As to quaternary structure, part of the 50S ribosomal subunit; part of the 5S rRNA/L5/L18/L25 subcomplex. Contacts the 5S and 23S rRNAs.

In terms of biological role, this is one of the proteins that bind and probably mediate the attachment of the 5S RNA into the large ribosomal subunit, where it forms part of the central protuberance. This Thermotoga petrophila (strain ATCC BAA-488 / DSM 13995 / JCM 10881 / RKU-1) protein is Large ribosomal subunit protein uL18.